Consider the following 271-residue polypeptide: Vacuolar arginine/histidine antiporter stm1 (271 aa).

Residues 14–80 (LTELSSFLGA…GNVSSTVLVL (67 aa)) enclose the PQ-loop 1 domain. 3 helical membrane passes run 17-37 (LSSF…IPQL), 49-69 (ISDL…LGSI), and 77-97 (VLVL…QIYY). S119 is modified (phosphoserine). Helical transmembrane passes span 144–164 (FGVM…IISS), 178–198 (PFTA…PQII), 211–231 (IIFF…ILVF), and 245–265 (PWIL…YQFI). In terms of domain architecture, PQ-loop 2 spans 185–239 (SSVLYFCARIPQIIKNHKAKSTEGLSIIFFVLASVGNTSYAFSILVFPASDYLNY).

It belongs to the laat-1 family.

The protein localises to the vacuole membrane. It carries out the reaction L-histidine(out) + L-arginine(in) = L-histidine(in) + L-arginine(out). Amino acid transporter that moves basic amino acids across the vacuolar membrane. Appears to function as an arginine/histidine antiporter. The chain is Vacuolar arginine/histidine antiporter stm1 (stm1) from Schizosaccharomyces pombe (strain 972 / ATCC 24843) (Fission yeast).